We begin with the raw amino-acid sequence, 308 residues long: Phenylcoumaran benzylic ether reductase 1 (308 aa).

NADP(+)-binding positions include 11–17, Arg36, and Arg45; that span reads GGTGYIG. Lys133 functions as the Proton acceptor in the catalytic mechanism. An NADP(+)-binding site is contributed by Arg137.

The protein belongs to the NmrA-type oxidoreductase family. Isoflavone reductase subfamily. Expressed in apical meristem and cotyledon veins of young seedlings. Expressed in vascular tissues of roots, leaves, stems and petals. Expressed in pollen grains. Expressed at low levels in cauline leaves and siliques.

It carries out the reaction (-)-dehydrodiconiferyl alcohol + NADPH + H(+) = (S)-isodihydrodehydrodiconiferyl alcohol + NADP(+). It catalyses the reaction (+)-dehydrodiconiferyl alcohol + NADPH + H(+) = (R)-isodihydrodehydrodiconiferyl alcohol + NADP(+). The catalysed reaction is (2R,3S)-dihydrodehydrodiconiferyl alcohol + NADPH + H(+) = (S)-tetrahydrodehydrodiconiferyl alcohol + NADP(+). The enzyme catalyses (2S,3R)-dihydrodehydrodiconiferyl alcohol + NADPH + H(+) = (R)-tetrahydrodehydrodiconiferyl alcohol + NADP(+). Oxidoreductase involved in lignan biosynthesis. Catalyzes the NADPH-dependent reduction of phenylcoumaran benzylic ethers. Converts dehydrodiconiferyl alcohol (DDC) to isodihydrodehydrodiconiferyl alcohol (IDDDC), and dihydrodehydrodiconiferyl alcohol (DDDC) to tetrahydrodehydrodiconiferyl alcohol (TDDC). Plays an important role in the biosynthesis of secondary metabolites. In addition to the 8-5'-linked neolignan DDC, can reduce the 8-8'-linked lignans, pinoresinol, and lariciresinol, but with lower activities. In Arabidopsis thaliana (Mouse-ear cress), this protein is Phenylcoumaran benzylic ether reductase 1.